A 151-amino-acid chain; its full sequence is RNA polymerase-binding transcription factor DksA (151 aa).

Residues 33-54 (NEAQLAHFRRILEAWRNQLRDE) adopt a coiled-coil conformation. Zn(2+) contacts are provided by C114, C117, C135, and C138. The dksA C4-type zinc-finger motif lies at 114–138 (CESCGVEIGIRRLEARPTADLCIDC).

Belongs to the DksA family. Interacts directly with the RNA polymerase.

It localises to the cytoplasm. Transcription factor that acts by binding directly to the RNA polymerase (RNAP). Required for negative regulation of rRNA expression and positive regulation of several amino acid biosynthesis promoters. Also required for regulation of fis expression. The chain is RNA polymerase-binding transcription factor DksA from Escherichia coli O157:H7.